The primary structure comprises 263 residues: UPF0739 protein C1orf74 homolog (263 aa).

It belongs to the UPF0739 family.

In Mus musculus (Mouse), this protein is UPF0739 protein C1orf74 homolog.